We begin with the raw amino-acid sequence, 560 residues long: Dihydroxy-acid dehydratase (560 aa).

The disordered stretch occupies residues 1–20; the sequence is MGDNLKKRSSMTTDGDNRAP. C52 is a [2Fe-2S] cluster binding site. Position 84 (D84) interacts with Mg(2+). Residue C125 coordinates [2Fe-2S] cluster. Residues D126 and K127 each contribute to the Mg(2+) site. K127 bears the N6-carboxylysine mark. C197 contributes to the [2Fe-2S] cluster binding site. Residue E448 participates in Mg(2+) binding. Residue S474 is the Proton acceptor of the active site.

The protein belongs to the IlvD/Edd family. In terms of assembly, homodimer. Requires [2Fe-2S] cluster as cofactor. It depends on Mg(2+) as a cofactor.

It catalyses the reaction (2R)-2,3-dihydroxy-3-methylbutanoate = 3-methyl-2-oxobutanoate + H2O. It carries out the reaction (2R,3R)-2,3-dihydroxy-3-methylpentanoate = (S)-3-methyl-2-oxopentanoate + H2O. The protein operates within amino-acid biosynthesis; L-isoleucine biosynthesis; L-isoleucine from 2-oxobutanoate: step 3/4. Its pathway is amino-acid biosynthesis; L-valine biosynthesis; L-valine from pyruvate: step 3/4. Functionally, functions in the biosynthesis of branched-chain amino acids. Catalyzes the dehydration of (2R,3R)-2,3-dihydroxy-3-methylpentanoate (2,3-dihydroxy-3-methylvalerate) into 2-oxo-3-methylpentanoate (2-oxo-3-methylvalerate) and of (2R)-2,3-dihydroxy-3-methylbutanoate (2,3-dihydroxyisovalerate) into 2-oxo-3-methylbutanoate (2-oxoisovalerate), the penultimate precursor to L-isoleucine and L-valine, respectively. This chain is Dihydroxy-acid dehydratase, found in Leptospira interrogans serogroup Icterohaemorrhagiae serovar copenhageni (strain Fiocruz L1-130).